A 257-amino-acid polypeptide reads, in one-letter code: uncharacterized protein (257 aa).

A Phosphoserine modification is found at serine 127. 2 disordered regions span residues 146–174 (HEDP…EDDG) and 210–231 (AREK…RREK). Residues 151 to 160 (PSSTYNSSIS) are compositionally biased toward polar residues. Positions 196 to 257 (HVRMVREVHE…QQQQEDEQKT (62 aa)) form a coiled coil.

This is an uncharacterized protein from Arabidopsis thaliana (Mouse-ear cress).